The chain runs to 289 residues: Serine/threonine-protein phosphatase Pgam5, mitochondrial (289 aa).

Residues 7-23 (FACGTGAGLAAYYLQKL) traverse the membrane as a helical segment.

The protein belongs to the phosphoglycerate mutase family. BPG-dependent PGAM subfamily. As to quaternary structure, interacts with Pk92B/ASK1.

It is found in the mitochondrion outer membrane. It carries out the reaction O-phospho-L-seryl-[protein] + H2O = L-seryl-[protein] + phosphate. The catalysed reaction is O-phospho-L-threonyl-[protein] + H2O = L-threonyl-[protein] + phosphate. Its function is as follows. Displays phosphatase activity for serine/threonine residues, and dephosphorylates and activates Pk92B kinase. Has apparently no phosphoglycerate mutase activity. This chain is Serine/threonine-protein phosphatase Pgam5, mitochondrial, found in Drosophila virilis (Fruit fly).